The sequence spans 404 residues: Cysteine desulfurase IscS (404 aa).

Residues 75–76 (AT), Asn155, Gln183, and 203–205 (SGH) each bind pyridoxal 5'-phosphate. Lys206 is subject to N6-(pyridoxal phosphate)lysine. Thr243 provides a ligand contact to pyridoxal 5'-phosphate. The active-site Cysteine persulfide intermediate is the Cys328. Cys328 lines the [2Fe-2S] cluster pocket.

Belongs to the class-V pyridoxal-phosphate-dependent aminotransferase family. NifS/IscS subfamily. As to quaternary structure, homodimer. Forms a heterotetramer with IscU, interacts with other sulfur acceptors. The cofactor is pyridoxal 5'-phosphate.

The protein resides in the cytoplasm. The catalysed reaction is (sulfur carrier)-H + L-cysteine = (sulfur carrier)-SH + L-alanine. It functions in the pathway cofactor biosynthesis; iron-sulfur cluster biosynthesis. Master enzyme that delivers sulfur to a number of partners involved in Fe-S cluster assembly, tRNA modification or cofactor biosynthesis. Catalyzes the removal of elemental sulfur atoms from cysteine to produce alanine. Functions as a sulfur delivery protein for Fe-S cluster synthesis onto IscU, an Fe-S scaffold assembly protein, as well as other S acceptor proteins. In Shewanella baltica (strain OS185), this protein is Cysteine desulfurase IscS.